Here is a 186-residue protein sequence, read N- to C-terminus: Probable chorismate pyruvate-lyase (186 aa).

Residues Arg-77, Leu-115, and Glu-174 each coordinate substrate.

Belongs to the UbiC family.

Its subcellular location is the cytoplasm. The enzyme catalyses chorismate = 4-hydroxybenzoate + pyruvate. The protein operates within cofactor biosynthesis; ubiquinone biosynthesis. Removes the pyruvyl group from chorismate, with concomitant aromatization of the ring, to provide 4-hydroxybenzoate (4HB) for the ubiquinone pathway. The chain is Probable chorismate pyruvate-lyase from Shewanella sp. (strain W3-18-1).